The sequence spans 393 residues: NAD(P)H-quinone oxidoreductase subunit H, chloroplastic (393 aa).

This sequence belongs to the complex I 49 kDa subunit family. In terms of assembly, NDH is composed of at least 16 different subunits, 5 of which are encoded in the nucleus.

It is found in the plastid. The protein localises to the chloroplast thylakoid membrane. The catalysed reaction is a plastoquinone + NADH + (n+1) H(+)(in) = a plastoquinol + NAD(+) + n H(+)(out). It carries out the reaction a plastoquinone + NADPH + (n+1) H(+)(in) = a plastoquinol + NADP(+) + n H(+)(out). In terms of biological role, NDH shuttles electrons from NAD(P)H:plastoquinone, via FMN and iron-sulfur (Fe-S) centers, to quinones in the photosynthetic chain and possibly in a chloroplast respiratory chain. The immediate electron acceptor for the enzyme in this species is believed to be plastoquinone. Couples the redox reaction to proton translocation, and thus conserves the redox energy in a proton gradient. This Calycanthus floridus var. glaucus (Eastern sweetshrub) protein is NAD(P)H-quinone oxidoreductase subunit H, chloroplastic.